A 127-amino-acid chain; its full sequence is NADPH-dependent 7-cyano-7-deazaguanine reductase (127 aa).

Cysteine 40 acts as the Thioimide intermediate in catalysis. The active-site Proton donor is the aspartate 47. Residues valine 62–leucine 64 and histidine 81–glutamate 82 each bind substrate.

Belongs to the GTP cyclohydrolase I family. QueF type 1 subfamily.

It localises to the cytoplasm. The catalysed reaction is 7-aminomethyl-7-carbaguanine + 2 NADP(+) = 7-cyano-7-deazaguanine + 2 NADPH + 3 H(+). The protein operates within tRNA modification; tRNA-queuosine biosynthesis. Functionally, catalyzes the NADPH-dependent reduction of 7-cyano-7-deazaguanine (preQ0) to 7-aminomethyl-7-deazaguanine (preQ1). The chain is NADPH-dependent 7-cyano-7-deazaguanine reductase from Campylobacter jejuni subsp. jejuni serotype O:2 (strain ATCC 700819 / NCTC 11168).